Here is a 68-residue protein sequence, read N- to C-terminus: Tabimmunregulin 12 (68 aa).

The first 24 residues, 1 to 24, serve as a signal peptide directing secretion; the sequence is MLFKSYVYFLAGLLLVGLFTSCDA. Positions 25 to 38 are excised as a propeptide; that stretch reads DAQYEELVPGFFRK.

In terms of tissue distribution, expressed in salivary glands.

The protein resides in the secreted. Its function is as follows. Horsefly salivary gland immunosuppressant protein that likely inhibits the host inflammatory response by regulation of anti- and pro-inflammatory cytokines. When tested on mouse splenocytes in the presence of LPS, it increases the secretion of the proinflammatory cytokine interleukin-10 (IL10) and decreases the secretion of the proinflammatory cytokine interferon-gamma (IFNG) in a dose-dependent manner. The chain is Tabimmunregulin 12 from Tabanus yao (Horsefly).